We begin with the raw amino-acid sequence, 327 residues long: Lipoyl synthase (327 aa).

7 residues coordinate [4Fe-4S] cluster: Cys72, Cys77, Cys83, Cys98, Cys102, Cys105, and Ser313. Residues 83-302 enclose the Radical SAM core domain; the sequence is CWSHGTATIM…RKVGLEKGFL (220 aa).

Belongs to the radical SAM superfamily. Lipoyl synthase family. [4Fe-4S] cluster is required as a cofactor.

Its subcellular location is the cytoplasm. It catalyses the reaction [[Fe-S] cluster scaffold protein carrying a second [4Fe-4S](2+) cluster] + N(6)-octanoyl-L-lysyl-[protein] + 2 oxidized [2Fe-2S]-[ferredoxin] + 2 S-adenosyl-L-methionine + 4 H(+) = [[Fe-S] cluster scaffold protein] + N(6)-[(R)-dihydrolipoyl]-L-lysyl-[protein] + 4 Fe(3+) + 2 hydrogen sulfide + 2 5'-deoxyadenosine + 2 L-methionine + 2 reduced [2Fe-2S]-[ferredoxin]. The protein operates within protein modification; protein lipoylation via endogenous pathway; protein N(6)-(lipoyl)lysine from octanoyl-[acyl-carrier-protein]: step 2/2. Catalyzes the radical-mediated insertion of two sulfur atoms into the C-6 and C-8 positions of the octanoyl moiety bound to the lipoyl domains of lipoate-dependent enzymes, thereby converting the octanoylated domains into lipoylated derivatives. The sequence is that of Lipoyl synthase from Francisella tularensis subsp. holarctica (strain FTNF002-00 / FTA).